The chain runs to 269 residues: MLLLSVNPPLFIPFIVAGDPSPEVTVDLALALEEAGADLLELGVPYSDPLADGPTIQRAAARALAGNMTLPKAIHLVAEMRKKGVTIPIILFTYYNPVLQLGEESFFALARENGANGVLIPDLPFEESGPLRELGERFDLPLISLVAPTSKQRIERIASVAQGFLYCVSSLGVTGMRETLPESLGDFVSEVKRHSRVPVAVGFGISTPEQVAMLKEVCDGVVIGSALVQKVEQLGERLLAPEEKEAAIAEFAAYARSLAAPLHAPCSLR.

Active-site proton acceptor residues include Glu41 and Asp52.

Belongs to the TrpA family. In terms of assembly, tetramer of two alpha and two beta chains.

The catalysed reaction is (1S,2R)-1-C-(indol-3-yl)glycerol 3-phosphate + L-serine = D-glyceraldehyde 3-phosphate + L-tryptophan + H2O. The protein operates within amino-acid biosynthesis; L-tryptophan biosynthesis; L-tryptophan from chorismate: step 5/5. Its function is as follows. The alpha subunit is responsible for the aldol cleavage of indoleglycerol phosphate to indole and glyceraldehyde 3-phosphate. The protein is Tryptophan synthase alpha chain of Geobacillus stearothermophilus (Bacillus stearothermophilus).